Here is a 541-residue protein sequence, read N- to C-terminus: L-ornithine N(5)-monooxygenase (541 aa).

FAD is bound by residues 50 to 58 (EKQPEFQWH) and glutamine 69. Lysine 74 contributes to the substrate binding site. Position 223 to 226 (223 to 226 (SGQS)) interacts with NADP(+). Residues 269–272 (NEIF) and asparagine 300 each bind substrate. An NADP(+)-binding site is contributed by 300–302 (NYS). The disordered stretch occupies residues 430–474 (TEIPKGPDGSLFDASEEEATWRPASPITPASPSPPSTPTSSALSQ). FAD is bound at residue 520–522 (SLL). Serine 523 lines the substrate pocket.

The protein belongs to the lysine N(6)-hydroxylase/L-ornithine N(5)-oxygenase family. As to quaternary structure, homotetramer. The cofactor is FAD.

The catalysed reaction is L-ornithine + NADPH + O2 = N(5)-hydroxy-L-ornithine + NADP(+) + H2O. The enzyme catalyses L-ornithine + NADH + O2 = N(5)-hydroxy-L-ornithine + NAD(+) + H2O. It participates in siderophore biosynthesis. L-ornithine N(5)-monooxygenase; part of the siderophore basidioferrin biosynthetic pathway. The biosynthesis of basidioferrin depends on the hydroxylation of ornithine to N(5)-hydroxyornithine, catalyzed by the monooxygenase SMO1. The second step, the acylation of N(5)-hydroxy-L-ornithine is catalyzed by a not yet identified N-acyltransferase. Finally, assembly of basidioferrin is catalyzed by the nonribosomal peptide synthase (NRPS) NPS2 via amide bond formation between three L-AHO molecules to release the linear L-AHO trimer. The protein is L-ornithine N(5)-monooxygenase (SMO1) of Ceriporiopsis subvermispora (strain B) (White-rot fungus).